The following is a 459-amino-acid chain: Putrescine aminotransferase (459 aa).

Pyridoxal 5'-phosphate-binding positions include 150–151 (GT) and Gln-274. Lys-300 carries the N6-(pyridoxal phosphate)lysine modification. Thr-332 contacts pyridoxal 5'-phosphate.

Belongs to the class-III pyridoxal-phosphate-dependent aminotransferase family. Putrescine aminotransferase subfamily. Pyridoxal 5'-phosphate serves as cofactor.

The catalysed reaction is an alkane-alpha,omega-diamine + 2-oxoglutarate = an omega-aminoaldehyde + L-glutamate. It carries out the reaction putrescine + 2-oxoglutarate = 1-pyrroline + L-glutamate + H2O. The enzyme catalyses cadaverine + 2-oxoglutarate = 5-aminopentanal + L-glutamate. It participates in amine and polyamine degradation; putrescine degradation; 4-aminobutanal from putrescine (transaminase route): step 1/1. In terms of biological role, catalyzes the aminotransferase reaction from putrescine to 2-oxoglutarate, leading to glutamate and 4-aminobutanal, which spontaneously cyclizes to form 1-pyrroline. This is the first step in one of two pathways for putrescine degradation, where putrescine is converted into 4-aminobutanoate (gamma-aminobutyrate or GABA) via 4-aminobutanal. Also functions as a cadaverine transaminase in a a L-lysine degradation pathway to succinate that proceeds via cadaverine, glutarate and L-2-hydroxyglutarate. The chain is Putrescine aminotransferase from Salmonella heidelberg (strain SL476).